The chain runs to 294 residues: tRNA pseudouridine synthase B (294 aa).

Asp39 (nucleophile) is an active-site residue.

It belongs to the pseudouridine synthase TruB family. Type 1 subfamily.

The enzyme catalyses uridine(55) in tRNA = pseudouridine(55) in tRNA. Functionally, responsible for synthesis of pseudouridine from uracil-55 in the psi GC loop of transfer RNAs. This Streptococcus pyogenes serotype M5 (strain Manfredo) protein is tRNA pseudouridine synthase B.